A 197-amino-acid polypeptide reads, in one-letter code: Holliday junction branch migration complex subunit RuvA (197 aa).

Positions Met1 to Leu64 are domain I. Residues Thr65 to Gln143 form a domain II region. The tract at residues Ile144–Val148 is flexible linker. The segment at Thr149–Lys197 is domain III.

This sequence belongs to the RuvA family. In terms of assembly, homotetramer. Forms an RuvA(8)-RuvB(12)-Holliday junction (HJ) complex. HJ DNA is sandwiched between 2 RuvA tetramers; dsDNA enters through RuvA and exits via RuvB. An RuvB hexamer assembles on each DNA strand where it exits the tetramer. Each RuvB hexamer is contacted by two RuvA subunits (via domain III) on 2 adjacent RuvB subunits; this complex drives branch migration. In the full resolvosome a probable DNA-RuvA(4)-RuvB(12)-RuvC(2) complex forms which resolves the HJ.

Its subcellular location is the cytoplasm. The RuvA-RuvB-RuvC complex processes Holliday junction (HJ) DNA during genetic recombination and DNA repair, while the RuvA-RuvB complex plays an important role in the rescue of blocked DNA replication forks via replication fork reversal (RFR). RuvA specifically binds to HJ cruciform DNA, conferring on it an open structure. The RuvB hexamer acts as an ATP-dependent pump, pulling dsDNA into and through the RuvAB complex. HJ branch migration allows RuvC to scan DNA until it finds its consensus sequence, where it cleaves and resolves the cruciform DNA. This chain is Holliday junction branch migration complex subunit RuvA, found in Clostridium botulinum (strain Loch Maree / Type A3).